The sequence spans 470 residues: Putative dipeptidase TSTA_079200 (470 aa).

Residues 40–60 traverse the membrane as a helical segment; it reads AWLFGLGTLGIILASVLLNPF. Positions 92 and 94 each coordinate Zn(2+). A disulfide bond links Cys143 and Cys237. N-linked (GlcNAc...) asparagine glycosylation is present at Asn188. Zn(2+) is bound at residue Glu208. His235 contributes to the substrate binding site. 2 residues coordinate Zn(2+): His279 and His300. Residues Arg311 and Asp371 each coordinate substrate.

The protein belongs to the metallo-dependent hydrolases superfamily. Peptidase M19 family. Zn(2+) serves as cofactor.

The protein localises to the membrane. It catalyses the reaction an L-aminoacyl-L-amino acid + H2O = 2 an L-alpha-amino acid. Functionally, hydrolyzes a wide range of dipeptides. This is Putative dipeptidase TSTA_079200 from Talaromyces stipitatus (strain ATCC 10500 / CBS 375.48 / QM 6759 / NRRL 1006) (Penicillium stipitatum).